The primary structure comprises 364 residues: 4-hydroxythreonine-4-phosphate dehydrogenase (364 aa).

Residues H148 and T149 each coordinate substrate. Positions 177, 216, and 301 each coordinate a divalent metal cation. 3 residues coordinate substrate: K309, N318, and R327.

It belongs to the PdxA family. Homodimer. Requires Zn(2+) as cofactor. The cofactor is Mg(2+). Co(2+) is required as a cofactor.

The protein localises to the cytoplasm. It carries out the reaction 4-(phosphooxy)-L-threonine + NAD(+) = 3-amino-2-oxopropyl phosphate + CO2 + NADH. It functions in the pathway cofactor biosynthesis; pyridoxine 5'-phosphate biosynthesis; pyridoxine 5'-phosphate from D-erythrose 4-phosphate: step 4/5. In terms of biological role, catalyzes the NAD(P)-dependent oxidation of 4-(phosphooxy)-L-threonine (HTP) into 2-amino-3-oxo-4-(phosphooxy)butyric acid which spontaneously decarboxylates to form 3-amino-2-oxopropyl phosphate (AHAP). The chain is 4-hydroxythreonine-4-phosphate dehydrogenase from Campylobacter jejuni (strain RM1221).